A 288-amino-acid chain; its full sequence is RanBP2-type zinc finger protein At1g67325 (288 aa).

The span at 1–11 (MSQVDNRNSSA) shows a compositional bias: polar residues. Disordered regions lie at residues 1–24 (MSQV…RRED), 52–77 (PADH…GAYL), 176–198 (MPRP…DNDW), 222–248 (PKPG…WKCD), and 265–288 (NCGA…ENDQ). The segment covering 15-24 (ARTDGGRRED) has biased composition (basic and acidic residues). 3 RanBP2-type zinc fingers span residues 22 to 53 (REDD…PRPA), 194 to 225 (RDND…PKPG), and 241 to 272 (PEGS…DKPG). A compositionally biased stretch (basic and acidic residues) spans 181–197 (FYPDEKSQKRDSTRDND). Residues 223-241 (KPGSQQGGSSDKISKQNAP) are compositionally biased toward polar residues. At serine 278 the chain carries Phosphoserine.

This chain is RanBP2-type zinc finger protein At1g67325, found in Arabidopsis thaliana (Mouse-ear cress).